Here is a 244-residue protein sequence, read N- to C-terminus: ATP synthase subunit a (244 aa).

6 helical membrane passes run Leu-17–Thr-37, Phe-75–Pro-95, Asp-112–Val-132, Leu-164–Leu-184, Phe-196–Phe-216, and Ser-217–Ser-237.

The protein belongs to the ATPase A chain family. As to quaternary structure, F-type ATPases have 2 components, CF(1) - the catalytic core - and CF(0) - the membrane proton channel. CF(1) has five subunits: alpha(3), beta(3), gamma(1), delta(1), epsilon(1). CF(0) has three main subunits: a(1), b(2) and c(9-12). The alpha and beta chains form an alternating ring which encloses part of the gamma chain. CF(1) is attached to CF(0) by a central stalk formed by the gamma and epsilon chains, while a peripheral stalk is formed by the delta and b chains.

It localises to the cell membrane. In terms of biological role, key component of the proton channel; it plays a direct role in the translocation of protons across the membrane. This is ATP synthase subunit a from Bacillus velezensis (strain DSM 23117 / BGSC 10A6 / LMG 26770 / FZB42) (Bacillus amyloliquefaciens subsp. plantarum).